The following is a 388-amino-acid chain: NADPH-dependent butanol dehydrogenase (388 aa).

This sequence belongs to the iron-containing alcohol dehydrogenase family.

Its function is as follows. This enzyme has activity using butanol and ethanol as substrates. This Clostridium saccharobutylicum protein is NADPH-dependent butanol dehydrogenase (adh1).